We begin with the raw amino-acid sequence, 701 residues long: Elongation factor G (701 aa).

In terms of domain architecture, tr-type G spans 8 to 286 (ERIRNIGIIA…AVVYYLPSPV (279 aa)). GTP is bound by residues 17 to 24 (AHIDAGKT), 85 to 89 (DTPGH), and 139 to 142 (NKMD).

This sequence belongs to the TRAFAC class translation factor GTPase superfamily. Classic translation factor GTPase family. EF-G/EF-2 subfamily.

Its subcellular location is the cytoplasm. Catalyzes the GTP-dependent ribosomal translocation step during translation elongation. During this step, the ribosome changes from the pre-translocational (PRE) to the post-translocational (POST) state as the newly formed A-site-bound peptidyl-tRNA and P-site-bound deacylated tRNA move to the P and E sites, respectively. Catalyzes the coordinated movement of the two tRNA molecules, the mRNA and conformational changes in the ribosome. The protein is Elongation factor G of Roseiflexus castenholzii (strain DSM 13941 / HLO8).